We begin with the raw amino-acid sequence, 181 residues long: Alkyl hydroperoxide reductase AhpD (181 aa).

Cysteine 131 serves as the catalytic Proton donor. A disulfide bridge links cysteine 131 with cysteine 134. The active-site Cysteine sulfenic acid (-SOH) intermediate is the cysteine 134.

The protein belongs to the AhpD family.

The catalysed reaction is N(6)-[(R)-dihydrolipoyl]-L-lysyl-[lipoyl-carrier protein] + a hydroperoxide = N(6)-[(R)-lipoyl]-L-lysyl-[lipoyl-carrier protein] + an alcohol + H2O. Antioxidant protein with alkyl hydroperoxidase activity. Required for the reduction of the AhpC active site cysteine residues and for the regeneration of the AhpC enzyme activity. In Rhodopseudomonas palustris (strain BisA53), this protein is Alkyl hydroperoxide reductase AhpD.